The sequence spans 402 residues: AA9 family lytic polysaccharide monooxygenase E (402 aa).

Positions 1–16 (MSRLVSFASLLAAVNA) are cleaved as a signal peptide. H17 contributes to the Cu(2+) binding site. Intrachain disulfides connect C72-C194 and C113-C117. N-linked (GlcNAc...) asparagine glycosylation occurs at N75. H102 provides a ligand contact to Cu(2+). N154 carries N-linked (GlcNAc...) asparagine glycosylation. Positions 180 and 189 each coordinate O2. Y191 contributes to the Cu(2+) binding site. The 37-residue stretch at 364 to 400 (GSNPLYAQCGGLNFKGASGCVAGATCKKMNPYYSQCV) folds into the CBM1 domain.

Belongs to the polysaccharide monooxygenase AA9 family. It depends on Cu(2+) as a cofactor.

The protein resides in the secreted. The enzyme catalyses [(1-&gt;4)-beta-D-glucosyl]n+m + reduced acceptor + O2 = 4-dehydro-beta-D-glucosyl-[(1-&gt;4)-beta-D-glucosyl]n-1 + [(1-&gt;4)-beta-D-glucosyl]m + acceptor + H2O.. In terms of biological role, lytic polysaccharide monooxygenase (LPMO) that depolymerizes crystalline and amorphous polysaccharides via the oxidation of scissile alpha- or beta-(1-4)-glycosidic bonds, yielding C1 or C4 oxidation products. Catalysis by LPMOs requires the reduction of the active-site copper from Cu(II) to Cu(I) by a reducing agent and H(2)O(2) or O(2) as a cosubstrate. This is AA9 family lytic polysaccharide monooxygenase E from Emericella nidulans (strain FGSC A4 / ATCC 38163 / CBS 112.46 / NRRL 194 / M139) (Aspergillus nidulans).